Reading from the N-terminus, the 269-residue chain is Shikimate dehydrogenase (NADP(+)) (269 aa).

Residues 17 to 19 (SKS) and T64 contribute to the shikimate site. The active-site Proton acceptor is K68. Position 80 (E80) interacts with NADP(+). Shikimate is bound by residues N89 and D105. NADP(+) is bound by residues 130–134 (GAGGA), 154–159 (NRTRAK), and M213. Y215 serves as a coordination point for shikimate. G237 provides a ligand contact to NADP(+).

Belongs to the shikimate dehydrogenase family. Homodimer.

It catalyses the reaction shikimate + NADP(+) = 3-dehydroshikimate + NADPH + H(+). The protein operates within metabolic intermediate biosynthesis; chorismate biosynthesis; chorismate from D-erythrose 4-phosphate and phosphoenolpyruvate: step 4/7. Its function is as follows. Involved in the biosynthesis of the chorismate, which leads to the biosynthesis of aromatic amino acids. Catalyzes the reversible NADPH linked reduction of 3-dehydroshikimate (DHSA) to yield shikimate (SA). The polypeptide is Shikimate dehydrogenase (NADP(+)) (Neisseria meningitidis serogroup B (strain ATCC BAA-335 / MC58)).